We begin with the raw amino-acid sequence, 366 residues long: MNKVVLYCRPGFEKECAAEITDKAARLEVFGFARVKEDSGYVIFEGYQQDDGEKLVRDLPFSSLIFARQMFVVGELLRDLPPEDRITPIVGMLQGVVEKGGELRVEVADTNESKELMKFCRKFTVPLRAALREAGVLTNYETPKRPVVHVFFIAPGCCYTGYSYSNNNSPFYMGIPRLKFPSDAPSRSTLKLEEAFHVFIPADEWDERLANGMYAVDLGACPGGWTYQLVKRNMWVSSVDNGPMAQSLMDTGQVTWLREDGFRYRPNRNNISWMVCDMVEKPAKVAALMAQWLVNGWCRETIFNLKLPMKKRYEEVSQNLAYIQAQLDEHGINAQIQARQLYHDREEVTVHVRRLWAAVGGRRDER.

Residues S188, 221 to 224 (CPGG), D240, D260, and D277 each bind S-adenosyl-L-methionine. K306 (proton acceptor) is an active-site residue.

Belongs to the class I-like SAM-binding methyltransferase superfamily. RNA methyltransferase RlmE family. RlmM subfamily. As to quaternary structure, monomer.

It is found in the cytoplasm. It catalyses the reaction cytidine(2498) in 23S rRNA + S-adenosyl-L-methionine = 2'-O-methylcytidine(2498) in 23S rRNA + S-adenosyl-L-homocysteine + H(+). Its function is as follows. Catalyzes the 2'-O-methylation at nucleotide C2498 in 23S rRNA. This chain is Ribosomal RNA large subunit methyltransferase M, found in Klebsiella pneumoniae (strain 342).